The chain runs to 1136 residues: MPSLFHGVYQALYDYEARTEDELTFSENSLLYLLEKSSTDEWLKAKKAGPAGTNEIGLVPLTYIEPAPAKRQAYALYDYDKQTEEELTFKEGDALTVYDDSDSEWLLVCRGGDEYGFVPANYTGDAPPSAAPAPVAAIPTPVAAIPTPAGQPTTPITKDSPLPPLPKDAFPPPPQAYRPPASTTHASTEPVYANGRDEESPPPMPARPGGSGNGSGRPSSGAGDSRSRGSSVSRSRNASSANDKPSSSSANFFTWPVQEVDGRKKRKATLAIGNGMIMFSPERSSGQPQQWPVKDLVNYNSEKKHVFLDFKHPTVSFDLHLGSKDTADEVIYALGELAGAYNSSGLTEVMMAANSAGQKLGKVLYKFDAQGRDEVSVEEGENVFIIDDTKSRDWWMVKNSSGVAGVVPSSYIEIAPSEKTLKKVVDQQRKASGSSRDKSRDRSRDDRSRDRADKRSSRSSRDAPKSKPDPRKVRTWTDRSGAFKVDAALLGCVDGKIHLHKVNGVKIAVACSKMAIEDLEYVEDVTGVDLEEDKPLSRDRGGSSRDRRRSTSRSDRRKSSSGAASSANAPKPTPESDYDWFGFFLDCGVDVHACQRYATSFTRDQMDESILPEVTPSTLRSLGLKEGDILRVTKKLDEKYGRSGTGTSASTPVGGNPSGGLFSDTTGALKNNTSKTLTKADDTDPWSSLDKQQAPPQQQAPPVQQQPPVQQQPIQAQPTAPIQQQPIQAQPTAPIQPVRTGSINDLMNIKPLQPTPTSSNLQTQATGGIMQPIQQQYTQQPMSQSTSALPQQSMNTGILPQTTGPLQQSLTGSAPVQNPFLTGGPNTLLSQQTGGLVGVPTGGLVGVPTGGLQGVPTGYTAQNVLGMNQPANTGGYSMNAITNALAGASLNKQQQQQQPMVQQLTGGSMFGQQPMQQQLTGSSIFQQQPMQQQFTQQQPMQQQFTQQQPMSQQLTGGSIFNSQPQQPFQQQPMQPQQTSFQQQQPFSTGASASPFGSQPTTPFGQPQQSAGLSYFNNIQPLQQQQAFGQQMQPQQTFQPQQPFQQPFQQPFQQQQQQPFQQQQQQPFQQQQQPFGGLQSQPTGFGFGNSSSPFGGMQSQQTGAPSTSFGQQPLQPTATGRQRANLASATPNNPFGF.

SH3 domains lie at 4–66 and 68–128; these read LFHG…YIEP and PAKR…DAPP. A disordered region spans residues 143–251; it reads AAIPTPAGQP…NDKPSSSSAN (109 aa). The segment covering 161–177 has biased composition (pro residues); that stretch reads PLPPLPKDAFPPPPQAY. The span at 216–251 shows a compositional bias: low complexity; that stretch reads GRPSSGAGDSRSRGSSVSRSRNASSANDKPSSSSAN. An SH3 3 domain is found at 356–417; it reads AGQKLGKVLY…PSSYIEIAPS (62 aa). 6 disordered regions span residues 423 to 475, 532 to 573, 640 to 739, 775 to 810, 928 to 1011, and 1024 to 1136; these read KVVD…KVRT, EDKP…PKPT, YGRS…QPVR, QQYT…QQSL, QPMQ…QSAG, and QQAF…PFGF. The span at 533–545 shows a compositional bias: basic and acidic residues; the sequence is DKPLSRDRGGSSR. Positions 663–677 are enriched in polar residues; that stretch reads SDTTGALKNNTSKTL. Low complexity-rich tracts occupy residues 692–737 and 775–786; these read QQAP…PIQP and QQYTQQPMSQST. Polar residues predominate over residues 787-810; the sequence is SALPQQSMNTGILPQTTGPLQQSL. Composition is skewed to low complexity over residues 928 to 953 and 962 to 987; these read QPMQ…MSQQ and SQPQ…QPFS. The segment covering 988–1011 has biased composition (polar residues); that stretch reads TGASASPFGSQPTTPFGQPQQSAG. Positions 1024–1095 are enriched in low complexity; it reads QQAFGQQMQP…FGNSSSPFGG (72 aa). Over residues 1096-1136 the composition is skewed to polar residues; it reads MQSQQTGAPSTSFGQQPLQPTATGRQRANLASATPNNPFGF.

Belongs to the SLA1 family. As to quaternary structure, component of the PAN1 actin cytoskeleton-regulatory complex.

The protein resides in the cell membrane. It localises to the endosome membrane. The protein localises to the cytoplasm. It is found in the cytoskeleton. Its subcellular location is the actin patch. Its function is as follows. Component of the PAN1 actin cytoskeleton-regulatory complex required for the internalization of endosomes during actin-coupled endocytosis. The complex links the site of endocytosis to the cell membrane-associated actin cytoskeleton. Mediates uptake of external molecules and vacuolar degradation of plasma membrane proteins. Plays a role in the proper organization of the cell membrane-associated actin cytoskeleton and promotes its destabilization. This chain is Actin cytoskeleton-regulatory complex protein SLA1 (SLA1), found in Yarrowia lipolytica (strain CLIB 122 / E 150) (Yeast).